A 404-amino-acid polypeptide reads, in one-letter code: E3 ubiquitin-protein ligase RNF128 (404 aa).

Residues Met-1–Ala-31 form the signal peptide. A PA domain is found at Asp-62 to Ile-166. Residues Ile-191–Phe-211 traverse the membrane as a helical segment. An RING-type; atypical zinc finger spans residues Cys-260–Lys-301. The interval Ile-336 to Gly-356 is disordered.

Post-translationally, auto-ubiquitinated. In terms of tissue distribution, expressed in the cement gland, cranial placodes, and the pronephros.

The protein resides in the endomembrane system. Its subcellular location is the cytoplasm. It is found in the perinuclear region. It catalyses the reaction S-ubiquitinyl-[E2 ubiquitin-conjugating enzyme]-L-cysteine + [acceptor protein]-L-lysine = [E2 ubiquitin-conjugating enzyme]-L-cysteine + N(6)-ubiquitinyl-[acceptor protein]-L-lysine.. It functions in the pathway protein modification; protein ubiquitination. Functionally, E3 ubiquitin-protein ligase that catalyzes polyubiquitin chains. Converts epidermis into cement gland and neural tissue in whole embryos. The protein is E3 ubiquitin-protein ligase RNF128 (rnf128) of Xenopus laevis (African clawed frog).